Consider the following 336-residue polypeptide: MGLIARVRKEWFIIGIVLVITFAKLQPSVGVKGGPLHPEITITYVAVSVIFFNSGLSLKTEELASALMHVKLHFFVQTFTLVFFPIAIWLLLKVLALTAINEWLLRGLQTVACMPPPVSSAVILTKAVGGNEAAAIFNSAFGSFLGIVVTPLLLLVFLGSSSSVPFTSIFSQLFMTVVVPLIVGQVCRRFLRECLDRRKPPFGAVSSVVLLMIIYSTFCDTFNNPNIELDHLSLLTVVFIIFSIQLSFMALIFFLSTRKSSGFSAADSVAIMFCATHKSLTLGIPMLKIVFEGYEHLSLISVPLLIYHPAQILLGSVLLPSIKTWMSGRQKTLTPI.

Topologically, residues 1–10 (MGLIARVRKE) are cytoplasmic. Residues 11–31 (WFIIGIVLVITFAKLQPSVGV) traverse the membrane as a helical segment. Residues 32 to 37 (KGGPLH) lie on the Extracellular side of the membrane. Residues 38 to 58 (PEITITYVAVSVIFFNSGLSL) traverse the membrane as a helical segment. At 59–71 (KTEELASALMHVK) the chain is on the cytoplasmic side. Residues 72–92 (LHFFVQTFTLVFFPIAIWLLL) form a helical membrane-spanning segment. Over 93–116 (KVLALTAINEWLLRGLQTVACMPP) the chain is Extracellular. A helical transmembrane segment spans residues 117–137 (PVSSAVILTKAVGGNEAAAIF). Position 138 (asparagine 138) is a topological domain, cytoplasmic. Residues 139-159 (SAFGSFLGIVVTPLLLLVFLG) traverse the membrane as a helical segment. Topologically, residues 160–163 (SSSS) are extracellular. The helical transmembrane segment at 164–184 (VPFTSIFSQLFMTVVVPLIVG) threads the bilayer. Topologically, residues 185–201 (QVCRRFLRECLDRRKPP) are cytoplasmic. Residues 202–222 (FGAVSSVVLLMIIYSTFCDTF) form a helical membrane-spanning segment. The Extracellular portion of the chain corresponds to 223-233 (NNPNIELDHLS). A helical membrane pass occupies residues 234 to 254 (LLTVVFIIFSIQLSFMALIFF). At 255-270 (LSTRKSSGFSAADSVA) the chain is on the cytoplasmic side. A helical membrane pass occupies residues 271–291 (IMFCATHKSLTLGIPMLKIVF). Residues 292–298 (EGYEHLS) lie on the Extracellular side of the membrane. Residues 299–319 (LISVPLLIYHPAQILLGSVLL) traverse the membrane as a helical segment. The Cytoplasmic segment spans residues 320–336 (PSIKTWMSGRQKTLTPI).

Belongs to the bile acid:sodium symporter (BASS) (TC 2.A.28) family.

The protein resides in the cell membrane. It is found in the endoplasmic reticulum membrane. The protein localises to the golgi apparatus membrane. Its function is as follows. Involved in teeth and skeletal development. Has an essential role in the biosynthesis and trafficking of glycosaminoglycans and glycoproteins to produce a proper functioning extracellular matrix. Required for extracellular matrix mineralization. Also involved in the regulation of cellular calcium homeostasis. Does not show transport activity towards bile acids or steroid sulfates. The protein is Sodium/bile acid cotransporter 7 (slc10a7) of Danio rerio (Zebrafish).